The sequence spans 304 residues: ATP synthase gamma chain (304 aa).

This sequence belongs to the ATPase gamma chain family. F-type ATPases have 2 components, CF(1) - the catalytic core - and CF(0) - the membrane proton channel. CF(1) has five subunits: alpha(3), beta(3), gamma(1), delta(1), epsilon(1). CF(0) has three main subunits: a, b and c.

The protein resides in the cell membrane. Produces ATP from ADP in the presence of a proton gradient across the membrane. The gamma chain is believed to be important in regulating ATPase activity and the flow of protons through the CF(0) complex. The chain is ATP synthase gamma chain from Thermobifida fusca (strain YX).